The chain runs to 246 residues: Ubiquinone biosynthesis O-methyltransferase (246 aa).

Residues Arg44, Gly63, Asp84, and Met128 each contribute to the S-adenosyl-L-methionine site.

This sequence belongs to the methyltransferase superfamily. UbiG/COQ3 family.

It carries out the reaction a 3-demethylubiquinol + S-adenosyl-L-methionine = a ubiquinol + S-adenosyl-L-homocysteine + H(+). It catalyses the reaction a 3-(all-trans-polyprenyl)benzene-1,2-diol + S-adenosyl-L-methionine = a 2-methoxy-6-(all-trans-polyprenyl)phenol + S-adenosyl-L-homocysteine + H(+). It participates in cofactor biosynthesis; ubiquinone biosynthesis. In terms of biological role, O-methyltransferase that catalyzes the 2 O-methylation steps in the ubiquinone biosynthetic pathway. In Xylella fastidiosa (strain Temecula1 / ATCC 700964), this protein is Ubiquinone biosynthesis O-methyltransferase.